The primary structure comprises 419 residues: Structure-specific endonuclease subunit slx4 (419 aa).

The protein belongs to the SLX4 family. Forms a heterodimer with slx1. Phosphorylated in response to DNA damage.

Its subcellular location is the nucleus. It localises to the nucleolus. Regulatory subunit of the slx1-slx4 structure-specific endonuclease that resolves DNA secondary structures generated during DNA repair and recombination. Has endonuclease activity towards branched DNA substrates, introducing single-strand cuts in duplex DNA close to junctions with ss-DNA. Has a preference for stem-loop (SL) and splayed arm Y structures. Introduces a single-strand cut in duplex DNA on the 3' side of a double-strand/single-strand junction with respect to the single-strand moving 3' to 5' away from the junction. Plays a critical role in maintaining the integrity of the ribosomal DNA (rDNA) loci, where it has a role in re-starting stalled replication forks. The complex initiates homologous recombination (HR) events, used to maintain rDNA copy number, in the rDNA repeats that are processed by a mechanism that requires rad22, but not rhp51. Has Holliday junction resolvase activity in vitro. Slx4 is required for efficient processing of DNA substrates. The protein is Structure-specific endonuclease subunit slx4 of Schizosaccharomyces pombe (strain 972 / ATCC 24843) (Fission yeast).